A 112-amino-acid chain; its full sequence is Cytochrome c (112 aa).

Residues Cys23, Cys26, and His27 each contribute to the heme c site. Lys81 bears the N6,N6,N6-trimethyllysine mark. Met89 lines the heme c pocket. An N6,N6,N6-trimethyllysine modification is found at Lys95.

The protein belongs to the cytochrome c family. Post-translationally, binds 1 heme c group covalently per subunit.

It is found in the mitochondrion intermembrane space. In terms of biological role, electron carrier protein. The oxidized form of the cytochrome c heme group can accept an electron from the heme group of the cytochrome c1 subunit of cytochrome reductase. Cytochrome c then transfers this electron to the cytochrome oxidase complex, the final protein carrier in the mitochondrial electron-transport chain. The polypeptide is Cytochrome c (CC-1) (Arabidopsis thaliana (Mouse-ear cress)).